Reading from the N-terminus, the 461-residue chain is Bifunctional protein HldE (461 aa).

The tract at residues 1-312 is ribokinase; the sequence is MLEFLSQQKP…IKSFNRVDFE (312 aa). An ATP-binding site is contributed by 191–194; the sequence is NKKE. Asp-259 is a catalytic residue. Positions 334–461 are cytidylyltransferase; sequence FTNGCFDIVH…KIIEKIKDKK (128 aa).

This sequence in the N-terminal section; belongs to the carbohydrate kinase PfkB family. The protein in the C-terminal section; belongs to the cytidylyltransferase family. Homodimer.

The enzyme catalyses D-glycero-beta-D-manno-heptose 7-phosphate + ATP = D-glycero-beta-D-manno-heptose 1,7-bisphosphate + ADP + H(+). It catalyses the reaction D-glycero-beta-D-manno-heptose 1-phosphate + ATP + H(+) = ADP-D-glycero-beta-D-manno-heptose + diphosphate. It participates in nucleotide-sugar biosynthesis; ADP-L-glycero-beta-D-manno-heptose biosynthesis; ADP-L-glycero-beta-D-manno-heptose from D-glycero-beta-D-manno-heptose 7-phosphate: step 1/4. The protein operates within nucleotide-sugar biosynthesis; ADP-L-glycero-beta-D-manno-heptose biosynthesis; ADP-L-glycero-beta-D-manno-heptose from D-glycero-beta-D-manno-heptose 7-phosphate: step 3/4. Functionally, catalyzes the phosphorylation of D-glycero-D-manno-heptose 7-phosphate at the C-1 position to selectively form D-glycero-beta-D-manno-heptose-1,7-bisphosphate. Its function is as follows. Catalyzes the ADP transfer from ATP to D-glycero-beta-D-manno-heptose 1-phosphate, yielding ADP-D-glycero-beta-D-manno-heptose. The protein is Bifunctional protein HldE of Campylobacter jejuni subsp. jejuni serotype O:6 (strain 81116 / NCTC 11828).